Here is a 578-residue protein sequence, read N- to C-terminus: 2-succinyl-5-enolpyruvyl-6-hydroxy-3-cyclohexene-1-carboxylate synthase (578 aa).

The protein belongs to the TPP enzyme family. MenD subfamily. In terms of assembly, homodimer. The cofactor is Mg(2+). Mn(2+) is required as a cofactor. Requires thiamine diphosphate as cofactor.

It catalyses the reaction isochorismate + 2-oxoglutarate + H(+) = 5-enolpyruvoyl-6-hydroxy-2-succinyl-cyclohex-3-ene-1-carboxylate + CO2. The protein operates within quinol/quinone metabolism; 1,4-dihydroxy-2-naphthoate biosynthesis; 1,4-dihydroxy-2-naphthoate from chorismate: step 2/7. It participates in quinol/quinone metabolism; menaquinone biosynthesis. Its function is as follows. Catalyzes the thiamine diphosphate-dependent decarboxylation of 2-oxoglutarate and the subsequent addition of the resulting succinic semialdehyde-thiamine pyrophosphate anion to isochorismate to yield 2-succinyl-5-enolpyruvyl-6-hydroxy-3-cyclohexene-1-carboxylate (SEPHCHC). This is 2-succinyl-5-enolpyruvyl-6-hydroxy-3-cyclohexene-1-carboxylate synthase from Bacillus velezensis (strain DSM 23117 / BGSC 10A6 / LMG 26770 / FZB42) (Bacillus amyloliquefaciens subsp. plantarum).